The chain runs to 87 residues: DNA-directed RNA polymerase subunit omega (87 aa).

Belongs to the RNA polymerase subunit omega family. As to quaternary structure, the RNAP catalytic core consists of 2 alpha, 1 beta, 1 beta' and 1 omega subunit. When a sigma factor is associated with the core the holoenzyme is formed, which can initiate transcription.

It catalyses the reaction RNA(n) + a ribonucleoside 5'-triphosphate = RNA(n+1) + diphosphate. In terms of biological role, promotes RNA polymerase assembly. Latches the N- and C-terminal regions of the beta' subunit thereby facilitating its interaction with the beta and alpha subunits. The protein is DNA-directed RNA polymerase subunit omega of Pseudomonas syringae pv. syringae (strain B728a).